A 347-amino-acid chain; its full sequence is DNA damage tolerance protein RHC31 (347 aa).

At S9 the chain carries Phosphoserine. K35 is covalently cross-linked (Glycyl lysine isopeptide (Lys-Gly) (interchain with G-Cter in SUMO)).

Functionally, could be involved in a ubiquitin-related process important for DNA damage tolerance. The chain is DNA damage tolerance protein RHC31 (AOS1) from Saccharomyces cerevisiae (strain ATCC 204508 / S288c) (Baker's yeast).